Consider the following 358-residue polypeptide: C-X-C chemokine receptor type 4 (358 aa).

The segment at 1–25 (MDGFSGGIDINIFDSNSTENGSGDF) is important for chemokine binding and signaling. At 1–44 (MDGFSGGIDINIFDSNSTENGSGDFEDFSEPCFMHDNSDFNRIF) the chain is on the extracellular side. 2 N-linked (GlcNAc...) asparagine glycosylation sites follow: N16 and N20. 2 cysteine pairs are disulfide-bonded: C32-C281 and C113-C190. A helical membrane pass occupies residues 45-67 (LPTIYSFIFLLGIIGNGLVVVVM). Over 68-81 (GYQKKSRTMTDKYR) the chain is Cytoplasmic. A helical membrane pass occupies residues 82-103 (LHLSVADLLFVFTLPFWSVDAA). A chemokine binding region spans residues 98 to 101 (WSVD). Topologically, residues 104-114 (IGWYFKEFLCK) are extracellular. A helical transmembrane segment spans residues 115–134 (AVHVIYTVNLYSSVLILAFI). The interval 117-121 (HVIYT) is chemokine binding. The Cytoplasmic segment spans residues 135–158 (SLDRYLAIVHATNSQGSRKMLADK). The tract at residues 139-151 (YLAIVHATNSQGS) is involved in dimerization; when bound to chemokine. The helical transmembrane segment at 159–178 (VVYAGVWLPALLLTVPDLVF) threads the bilayer. Topologically, residues 179-202 (ARVSDENGQFVCDRIYPIDNRETW) are extracellular. Residues 190–194 (CDRIY) are chemokine binding, important for signaling. A helical membrane pass occupies residues 203-223 (TVGFRFLHITVGLILPGLIIL). The Cytoplasmic portion of the chain corresponds to 224–248 (ICYCVIISKLSHSKGHQKRKALKTT). Residues 249–268 (VILILAFFACWLPYYVCLTT) traverse the membrane as a helical segment. At 269-289 (DTFMLLGLLKADCIWENTLHK) the chain is on the extracellular side. The helical transmembrane segment at 290–309 (AISITEALAFFHCCLNPILY) threads the bilayer. The Cytoplasmic segment spans residues 310 to 358 (AFLGAKFKTSAQNAFTSVSRGSSLKILSKKRAGLSSVSTESESSSFHSS). The disordered stretch occupies residues 338-358 (KKRAGLSSVSTESESSSFHSS). The span at 344 to 358 (SSVSTESESSSFHSS) shows a compositional bias: low complexity.

The protein belongs to the G-protein coupled receptor 1 family. As to quaternary structure, monomer. Can form dimers. Post-translationally, sulfation is required for efficient binding of cxcl12/sdf-1alpha and promotes its dimerization. In terms of processing, O- and N-glycosylated.

Its subcellular location is the cell membrane. The protein resides in the cytoplasm. It localises to the nucleus. It is found in the early endosome. The protein localises to the late endosome. Its subcellular location is the lysosome. In terms of biological role, receptor for the C-X-C chemokine cxcl12/sdf-1. Transduces a signal by increasing the intracellular calcium ion level. Signaling with cxcl12/sdf-1 mediates the directional movement of mesodermal cells during gastrulation. May play a role in the migration of embryonic presumptive primordial germ cells (pPGCs). May also be involved in regulating migration of hematopoietic stem cells into the larval liver. This is C-X-C chemokine receptor type 4 from Xenopus tropicalis (Western clawed frog).